The chain runs to 255 residues: ATP synthase subunit b 1 (255 aa).

Residues 5 to 22 traverse the membrane as a helical segment; that stretch reads WITVAAQIVNFLLLIWLL.

This sequence belongs to the ATPase B chain family. In terms of assembly, F-type ATPases have 2 components, F(1) - the catalytic core - and F(0) - the membrane proton channel. F(1) has five subunits: alpha(3), beta(3), gamma(1), delta(1), epsilon(1). F(0) has three main subunits: a(1), b(2) and c(10-14). The alpha and beta chains form an alternating ring which encloses part of the gamma chain. F(1) is attached to F(0) by a central stalk formed by the gamma and epsilon chains, while a peripheral stalk is formed by the delta and b chains.

Its subcellular location is the cell inner membrane. F(1)F(0) ATP synthase produces ATP from ADP in the presence of a proton or sodium gradient. F-type ATPases consist of two structural domains, F(1) containing the extramembraneous catalytic core and F(0) containing the membrane proton channel, linked together by a central stalk and a peripheral stalk. During catalysis, ATP synthesis in the catalytic domain of F(1) is coupled via a rotary mechanism of the central stalk subunits to proton translocation. In terms of biological role, component of the F(0) channel, it forms part of the peripheral stalk, linking F(1) to F(0). This Dinoroseobacter shibae (strain DSM 16493 / NCIMB 14021 / DFL 12) protein is ATP synthase subunit b 1.